Consider the following 84-residue polypeptide: Putative membrane protein insertion efficiency factor (84 aa).

Positions 63–84 (GEDPVPNHFTLRRNKKEKPSKS) are disordered.

The protein belongs to the UPF0161 family.

It is found in the cell membrane. Its function is as follows. Could be involved in insertion of integral membrane proteins into the membrane. The protein is Putative membrane protein insertion efficiency factor of Streptococcus mutans serotype c (strain ATCC 700610 / UA159).